The chain runs to 322 residues: Cytochrome c biogenesis protein CcsA (322 aa).

8 helical membrane passes run 15–35, 45–65, 72–92, 98–120, 144–164, 226–246, 253–273, and 287–307; these read FSIV…VDGI, GMIV…TYSG, LYES…VPYF, YLST…GLLT, MILG…LLVI, GISL…VWAN, WNWD…AIYL, and AIVA…VNLL.

It belongs to the CcmF/CycK/Ccl1/NrfE/CcsA family. In terms of assembly, may interact with Ccs1.

The protein localises to the plastid. It localises to the chloroplast thylakoid membrane. Its function is as follows. Required during biogenesis of c-type cytochromes (cytochrome c6 and cytochrome f) at the step of heme attachment. This Coffea arabica (Arabian coffee) protein is Cytochrome c biogenesis protein CcsA.